The sequence spans 178 residues: Large ribosomal subunit protein uL5 (178 aa).

The protein belongs to the universal ribosomal protein uL5 family. As to quaternary structure, part of the 50S ribosomal subunit; part of the 5S rRNA/L5/L18/L25 subcomplex. Contacts the 5S rRNA and the P site tRNA. Forms a bridge to the 30S subunit in the 70S ribosome.

Functionally, this is one of the proteins that bind and probably mediate the attachment of the 5S RNA into the large ribosomal subunit, where it forms part of the central protuberance. In the 70S ribosome it contacts protein S13 of the 30S subunit (bridge B1b), connecting the 2 subunits; this bridge is implicated in subunit movement. Contacts the P site tRNA; the 5S rRNA and some of its associated proteins might help stabilize positioning of ribosome-bound tRNAs. This Wigglesworthia glossinidia brevipalpis protein is Large ribosomal subunit protein uL5.